The following is a 536-amino-acid chain: CTP synthase (536 aa).

An amidoligase domain region spans residues 1–267; the sequence is MTKFIFVTGG…DDIVIKRLQL (267 aa). Ser-13 lines the CTP pocket. Ser-13 lines the UTP pocket. 14 to 19 contributes to the ATP binding site; the sequence is SLGKGI. Tyr-54 provides a ligand contact to L-glutamine. Asp-71 lines the ATP pocket. Residues Asp-71 and Glu-141 each coordinate Mg(2+). CTP is bound by residues 148–150, 188–193, and Lys-224; these read DIE and KTKPTQ. UTP contacts are provided by residues 188-193 and Lys-224; that span reads KTKPTQ. ATP is bound at residue 240-242; sequence RDA. In terms of domain architecture, Glutamine amidotransferase type-1 spans 293-535; sequence TIGLVGKYVS…IEASLKYQQN (243 aa). An L-glutamine-binding site is contributed by Gly-355. Cys-382 serves as the catalytic Nucleophile; for glutamine hydrolysis. L-glutamine-binding positions include 383–386, Glu-406, and Arg-463; that span reads LGMQ. Catalysis depends on residues His-508 and Glu-510.

It belongs to the CTP synthase family. As to quaternary structure, homotetramer.

The catalysed reaction is UTP + L-glutamine + ATP + H2O = CTP + L-glutamate + ADP + phosphate + 2 H(+). It carries out the reaction L-glutamine + H2O = L-glutamate + NH4(+). It catalyses the reaction UTP + NH4(+) + ATP = CTP + ADP + phosphate + 2 H(+). Its pathway is pyrimidine metabolism; CTP biosynthesis via de novo pathway; CTP from UDP: step 2/2. Its activity is regulated as follows. Allosterically activated by GTP, when glutamine is the substrate; GTP has no effect on the reaction when ammonia is the substrate. The allosteric effector GTP functions by stabilizing the protein conformation that binds the tetrahedral intermediate(s) formed during glutamine hydrolysis. Inhibited by the product CTP, via allosteric rather than competitive inhibition. In terms of biological role, catalyzes the ATP-dependent amination of UTP to CTP with either L-glutamine or ammonia as the source of nitrogen. Regulates intracellular CTP levels through interactions with the four ribonucleotide triphosphates. The polypeptide is CTP synthase (Staphylococcus aureus (strain NCTC 8325 / PS 47)).